The chain runs to 297 residues: Alarmin release inhibitor (297 aa).

3 N-linked (GlcNAc...) asparagine glycosylation sites follow: N107, N175, and N190. The Sushi domain occupies 151 to 211 (TYDPTPNTPT…WVPTLGVCPK (61 aa)). C183 and C209 are disulfide-bonded.

In terms of assembly, interacts with mouse IL33 (in reduced form).

The protein localises to the secreted. Its subcellular location is the host nucleus. In terms of biological role, secreted protein which suppresses the host allergic response by inhibiting the interaction of host IL33 with its receptor in order to maintain parasitic infection. Binds to both host IL33 and host nuclear DNA and this dual binding blocks the interaction of IL33 with its receptor, and tethers IL33 within necrotic cells, preventing its release, and blocking allergic response initiation. This Heligmosomoides polygyrus (Parasitic roundworm) protein is Alarmin release inhibitor.